A 366-amino-acid polypeptide reads, in one-letter code: Ribosomal RNA large subunit methyltransferase M (366 aa).

S-adenosyl-L-methionine-binding positions include Ser-188, 221–224 (CPGG), Asp-240, Asp-260, and Asp-277. The Proton acceptor role is filled by Lys-306.

This sequence belongs to the class I-like SAM-binding methyltransferase superfamily. RNA methyltransferase RlmE family. RlmM subfamily. In terms of assembly, monomer.

Its subcellular location is the cytoplasm. The catalysed reaction is cytidine(2498) in 23S rRNA + S-adenosyl-L-methionine = 2'-O-methylcytidine(2498) in 23S rRNA + S-adenosyl-L-homocysteine + H(+). Its function is as follows. Catalyzes the 2'-O-methylation at nucleotide C2498 in 23S rRNA. This is Ribosomal RNA large subunit methyltransferase M from Citrobacter koseri (strain ATCC BAA-895 / CDC 4225-83 / SGSC4696).